Consider the following 317-residue polypeptide: Lipoyl synthase (317 aa).

The tract at residues 1–28 (MDSQPQSKKAARGADKTARNPIPIIPAP) is disordered. Residues Cys-64, Cys-69, Cys-75, Cys-90, Cys-94, Cys-97, and Ser-304 each contribute to the [4Fe-4S] cluster site. The Radical SAM core domain occupies 76–293 (FGGGTATFMI…QRDGMAMGFR (218 aa)).

It belongs to the radical SAM superfamily. Lipoyl synthase family. Requires [4Fe-4S] cluster as cofactor.

It is found in the cytoplasm. The catalysed reaction is [[Fe-S] cluster scaffold protein carrying a second [4Fe-4S](2+) cluster] + N(6)-octanoyl-L-lysyl-[protein] + 2 oxidized [2Fe-2S]-[ferredoxin] + 2 S-adenosyl-L-methionine + 4 H(+) = [[Fe-S] cluster scaffold protein] + N(6)-[(R)-dihydrolipoyl]-L-lysyl-[protein] + 4 Fe(3+) + 2 hydrogen sulfide + 2 5'-deoxyadenosine + 2 L-methionine + 2 reduced [2Fe-2S]-[ferredoxin]. Its pathway is protein modification; protein lipoylation via endogenous pathway; protein N(6)-(lipoyl)lysine from octanoyl-[acyl-carrier-protein]: step 2/2. Its function is as follows. Catalyzes the radical-mediated insertion of two sulfur atoms into the C-6 and C-8 positions of the octanoyl moiety bound to the lipoyl domains of lipoate-dependent enzymes, thereby converting the octanoylated domains into lipoylated derivatives. The polypeptide is Lipoyl synthase (Acidithiobacillus ferrooxidans (strain ATCC 23270 / DSM 14882 / CIP 104768 / NCIMB 8455) (Ferrobacillus ferrooxidans (strain ATCC 23270))).